The sequence spans 1406 residues: Carboxypeptidase D (1406 aa).

The N-terminal stretch at 1–25 (MPTLGLLFASIGIAVLAMGVPHCRG) is a signal peptide. Topologically, residues 26–1312 (YTIKEDESFL…VNEHVFGLPR (1287 aa)) are extracellular. Peptidase M14 domains lie at 39-335 (HYAS…LRQA) and 455-760 (EHHN…IEQV). Residues H101 and E104 each coordinate Zn(2+). The N-linked (GlcNAc...) asparagine glycan is linked to N133. Cystine bridges form between C156–C309, C236–C237, and C268–C308. H217 contacts Zn(2+). N-linked (GlcNAc...) asparagine glycosylation occurs at N269. The active-site Proton donor/acceptor is the E305. An N-linked (GlcNAc...) asparagine glycan is attached at N458. Residues H517 and E520 each coordinate Zn(2+). N-linked (GlcNAc...) asparagine glycans are attached at residues N549 and N612. H626 serves as a coordination point for Zn(2+). N-linked (GlcNAc...) asparagine glycosylation is present at N652. E730 acts as the Proton donor/acceptor in catalysis. N787, N808, N981, N1152, and N1251 each carry an N-linked (GlcNAc...) asparagine glycan. A Peptidase M14 3 domain is found at 863 to 1121 (RYHTNPQVRA…DKIKNFLALV (259 aa)). A helical transmembrane segment spans residues 1313 to 1333 (FLFILCASVLIIVGVIVCVLC). Topologically, residues 1334–1406 (AQFWFYRRHR…TNYSFIIQAA (73 aa)) are cytoplasmic. A Cell attachment site motif is present at residues 1343–1345 (RGD). S1380 is modified (phosphoserine).

The protein belongs to the peptidase M14 family. In terms of assembly, monomer. Zn(2+) is required as a cofactor. Expressed in the central nervous system (CNS) of adults and larvae. In the adult brain, increased levels of expression in the mushroom body (MB) and neurosecretory cells.

Its subcellular location is the membrane. It localises to the cytoplasm. The protein resides in the perinuclear region. The protein localises to the golgi apparatus. It is found in the trans-Golgi network. Its subcellular location is the secreted. It carries out the reaction Releases C-terminal Arg and Lys from polypeptides.. Its activity is regulated as follows. Inhibited by 2-guanidinoethylmercaptosuccinic acid (GEMSA). Its function is as follows. Metallocarboxypeptidase that catalyzes the release of C-terminal arginine or lysine residues from peptides and proteins. Functionally important for processing a broad range of proteins including growth factors, peptide hormones (such as Akh) and neuropeptides. Consequently, it is involved in a wide range of processes including viability, memory formation, locomotive activity, wing formation, and peptide-regulated behaviors such as starvation-induced hyperactivity, appetitive gustatory preference, and cold and ethanol sensitivity. Key enzyme in neuropeptide processing. Involved in regulation of memory formation, possibly via the insulin pathway in neurosecretory cells. This is Carboxypeptidase D from Drosophila melanogaster (Fruit fly).